The sequence spans 347 residues: UPF0284 protein M164_0030 (347 aa).

Belongs to the UPF0284 family.

The polypeptide is UPF0284 protein M164_0030 (Saccharolobus islandicus (strain M.16.4 / Kamchatka #3) (Sulfolobus islandicus)).